The primary structure comprises 222 residues: Transmembrane reductase CYB561D2 (222 aa).

Over 2–17 (ALSAETESHIYRALRT) the chain is Cytoplasmic. Positions 14–217 (ALRTASGAAA…NQVSNAYLYR (204 aa)) constitute a Cytochrome b561 domain. A helical membrane pass occupies residues 18-38 (ASGAAAHLVALGFTIFVAVLA). The Lumenal segment spans residues 39-46 (RPGSSLFS). Residues 47–67 (WHPVLMSLAFSFLMTEALLVF) form a helical membrane-spanning segment. His48 contributes to the heme b binding site. At 68–85 (SPESSLLHSLSRKGRARC) the chain is on the cytoplasmic side. Heme b is bound by residues His86 and His120. The chain crosses the membrane as a helical span at residues 86–106 (HWVLQLLALLCALLGLGLVIL). The Lumenal segment spans residues 107-122 (HKEQLGKAHLVTRHGQ). A helical membrane pass occupies residues 123 to 143 (AGLLAVLWAGLQCSGGVGLLY). The Cytoplasmic segment spans residues 144–162 (PKLLPRWPLAKLKLYHATS). A heme b-binding site is contributed by His159. Residues 163–183 (GLVGYLLGSASLLLGMCSLWF) traverse the membrane as a helical segment. At 184–186 (TAS) the chain is on the lumenal side. Residues 187–207 (VTGAAWYLAVLCPVLTSLVIM) form a helical membrane-spanning segment. Topologically, residues 208–222 (NQVSNAYLYRKRIQP) are cytoplasmic.

Heme b is required as a cofactor.

Its subcellular location is the endoplasmic reticulum membrane. The protein resides in the cytoplasmic vesicle membrane. The catalysed reaction is monodehydro-L-ascorbate radical(out) + L-ascorbate(in) = monodehydro-L-ascorbate radical(in) + L-ascorbate(out). It catalyses the reaction Fe(3+)(out) + L-ascorbate(in) = monodehydro-L-ascorbate radical(in) + Fe(2+)(out) + H(+). In terms of biological role, transmembrane reductase that may use ascorbate as an electron donor in the cytoplasm and transfer electrons across endoplasmic reticulum membranes to reduce monodehydro-L-ascorbate radical and iron cations Fe(3+) in the lumen of that compartment. This is Transmembrane reductase CYB561D2 from Homo sapiens (Human).